We begin with the raw amino-acid sequence, 187 residues long: Peptidyl-tRNA hydrolase (187 aa).

Tyrosine 14 contributes to the tRNA binding site. Residue histidine 19 is the Proton acceptor of the active site. Residues tyrosine 64 and asparagine 66 each contribute to the tRNA site.

This sequence belongs to the PTH family. As to quaternary structure, monomer.

Its subcellular location is the cytoplasm. It carries out the reaction an N-acyl-L-alpha-aminoacyl-tRNA + H2O = an N-acyl-L-amino acid + a tRNA + H(+). In terms of biological role, hydrolyzes ribosome-free peptidyl-tRNAs (with 1 or more amino acids incorporated), which drop off the ribosome during protein synthesis, or as a result of ribosome stalling. Its function is as follows. Catalyzes the release of premature peptidyl moieties from peptidyl-tRNA molecules trapped in stalled 50S ribosomal subunits, and thus maintains levels of free tRNAs and 50S ribosomes. The polypeptide is Peptidyl-tRNA hydrolase (Carboxydothermus hydrogenoformans (strain ATCC BAA-161 / DSM 6008 / Z-2901)).